Here is a 172-residue protein sequence, read N- to C-terminus: Putative phosphoesterase BAMEG_3349 (172 aa).

The active-site Proton donor is the His-34. 2 consecutive short sequence motifs (HXTX) follow at residues 34–37 (HITL) and 115–118 (HLTI). The Proton acceptor role is filled by His-115.

Belongs to the 2H phosphoesterase superfamily. YjcG family.

In Bacillus anthracis (strain CDC 684 / NRRL 3495), this protein is Putative phosphoesterase BAMEG_3349.